A 443-amino-acid chain; its full sequence is Maintenance of mitochondrial morphology protein 1 (443 aa).

At 1-80 (MADLETSDLS…PSNTWSFTQG (80 aa)) the chain is on the lumenal side. Residues 81–101 (LIVGQLSVVFVIVIFIKFFVF) traverse the membrane as a helical segment. At 102–443 (AESSPALAKS…NGDKVEDGSN (342 aa)) the chain is on the cytoplasmic side. Disordered stretches follow at residues 126-146 (KKDQ…TTAS) and 304-358 (LSAH…NDGT). Acidic residues predominate over residues 131-142 (SSDDADPDDDSE). The 253-residue stretch at 165-417 (SPESLDWFNV…EPRFQVVRLP (253 aa)) folds into the SMP-LTD domain.

Belongs to the MMM1 family. As to quaternary structure, homodimer. Component of the ER-mitochondria encounter structure (ERMES) or MDM complex, composed of MMM1, MDM10, MDM12 and MDM34. An MMM1 homodimer associates with one molecule of MDM12 on each side in a pairwise head-to-tail manner, and the SMP-LTD domains of MMM1 and MDM12 generate a continuous hydrophobic tunnel for phospholipid trafficking.

It localises to the endoplasmic reticulum membrane. Its function is as follows. Component of the ERMES/MDM complex, which serves as a molecular tether to connect the endoplasmic reticulum (ER) and mitochondria. Components of this complex are involved in the control of mitochondrial shape and protein biogenesis, and function in nonvesicular lipid trafficking between the ER and mitochondria. The MDM12-MMM1 subcomplex functions in the major beta-barrel assembly pathway that is responsible for biogenesis of all outer membrane beta-barrel proteins, and acts in a late step after the SAM complex. The MDM10-MDM12-MMM1 subcomplex further acts in the TOM40-specific pathway after the action of the MDM12-MMM1 complex. Essential for establishing and maintaining the structure of mitochondria and maintenance of mtDNA nucleoids. In Scheffersomyces stipitis (strain ATCC 58785 / CBS 6054 / NBRC 10063 / NRRL Y-11545) (Yeast), this protein is Maintenance of mitochondrial morphology protein 1.